Here is a 334-residue protein sequence, read N- to C-terminus: Ornithine carbamoyltransferase (334 aa).

Carbamoyl phosphate is bound by residues 57-60 (STRT), Arg108, and 135-138 (HPTQ). L-ornithine contacts are provided by residues Asn168, Asp232, and 236–237 (SM). Carbamoyl phosphate-binding positions include 274–275 (CL) and Arg321.

This sequence belongs to the aspartate/ornithine carbamoyltransferase superfamily. OTCase family.

Its subcellular location is the cytoplasm. The catalysed reaction is carbamoyl phosphate + L-ornithine = L-citrulline + phosphate + H(+). The protein operates within amino-acid biosynthesis; L-arginine biosynthesis; L-arginine from L-ornithine and carbamoyl phosphate: step 1/3. Reversibly catalyzes the transfer of the carbamoyl group from carbamoyl phosphate (CP) to the N(epsilon) atom of ornithine (ORN) to produce L-citrulline. The protein is Ornithine carbamoyltransferase of Cutibacterium acnes (strain DSM 16379 / KPA171202) (Propionibacterium acnes).